The following is a 195-amino-acid chain: Ras-related protein Rab-31 (195 aa).

GTP-binding residues include Gly16, Gly18, Lys19, Ser20, Ser21, Asp32, and His33. Ser20 provides a ligand contact to Mg(2+). 2 short sequence motifs (switch) span residues 30–42 (HFDH…IGAS) and 63–79 (AGQE…YRGS). Ser36 bears the Phosphoserine mark. GTP is bound by residues Thr38, Gly64, Asn119, Asp122, Ala150, and Lys151. Thr38 serves as a coordination point for Mg(2+). Residues Cys194 and Cys195 are each lipidated (S-geranylgeranyl cysteine).

It belongs to the small GTPase superfamily. Rab family. As to quaternary structure, interacts with OCRL. Interacts with NGFR. Interacts (in GDP-bound form) with RIN3 and GAPVD1, which function as guanine exchange factors (GEF). Interacts (in GTP-bound form) with EEA1. Interacts with EGFR. Interacts (in GTP-bound form) with APPL2; interaction contributes to or enhances recruitment of APPL2 to the phagosomes; interaction enhances Fc-gamma receptor-mediated phagocytosis through PI3K/Akt signaling in macrophages. Requires Mg(2+) as cofactor. Highest expression in placenta and brain with lower levels in heart and lung. Not detected in liver, skeletal muscle, kidney or pancreas.

Its subcellular location is the golgi apparatus. The protein localises to the trans-Golgi network. It is found in the trans-Golgi network membrane. It localises to the early endosome. The protein resides in the cytoplasmic vesicle. Its subcellular location is the phagosome. The protein localises to the phagosome membrane. The enzyme catalyses GTP + H2O = GDP + phosphate + H(+). With respect to regulation, regulated by guanine nucleotide exchange factors (GEFs) including RIN3 and GAPVD1 which promote the exchange of bound GDP for free GTP. Regulated by GTPase activating proteins (GAPs) which increase the GTP hydrolysis activity. Inhibited by GDP dissociation inhibitors (GDIs) which prevent Rab-GDP dissociation. Its function is as follows. The small GTPases Rab are key regulators of intracellular membrane trafficking, from the formation of transport vesicles to their fusion with membranes. Rabs cycle between an inactive GDP-bound form and an active GTP-bound form that is able to recruit to membranes different set of downstream effectors directly responsible for vesicle formation, movement, tethering and fusion. Required for the integrity and for normal function of the Golgi apparatus and the trans-Golgi network. Plays a role in insulin-stimulated translocation of GLUT4 to the cell membrane. Plays a role in M6PR transport from the trans-Golgi network to endosomes. Plays a role in the internalization of EGFR from the cell membrane into endosomes. Plays a role in the maturation of phagosomes that engulf pathogens, such as S.aureus and M.tuberculosis. This Homo sapiens (Human) protein is Ras-related protein Rab-31.